Consider the following 308-residue polypeptide: D-alanine--D-alanine ligase (308 aa).

The 196-residue stretch at 100-295 folds into the ATP-grasp domain; the sequence is KEVFVRNGLP…FDGLIGRLIE (196 aa). ATP is bound at residue 127-180; the sequence is PFAFPAFIKSNNGGSSLALHRVSCPGELARALDELFTRGGEAIIEPAVEGVEVT. Residues D249, E262, and N264 each contribute to the Mg(2+) site.

It belongs to the D-alanine--D-alanine ligase family. Mg(2+) serves as cofactor. The cofactor is Mn(2+).

Its subcellular location is the cytoplasm. The catalysed reaction is 2 D-alanine + ATP = D-alanyl-D-alanine + ADP + phosphate + H(+). It functions in the pathway cell wall biogenesis; peptidoglycan biosynthesis. Its function is as follows. Cell wall formation. In Oleidesulfovibrio alaskensis (strain ATCC BAA-1058 / DSM 17464 / G20) (Desulfovibrio alaskensis), this protein is D-alanine--D-alanine ligase.